The primary structure comprises 75 residues: DNA-directed RNA polymerase subunit epsilon (75 aa).

Belongs to the RNA polymerase subunit epsilon family. As to quaternary structure, RNAP is composed of a core of 2 alpha, a beta and a beta' subunit. The core is associated with a delta subunit, and at least one of epsilon or omega. When a sigma factor is associated with the core the holoenzyme is formed, which can initiate transcription.

The catalysed reaction is RNA(n) + a ribonucleoside 5'-triphosphate = RNA(n+1) + diphosphate. Its function is as follows. A non-essential component of RNA polymerase (RNAP). The sequence is that of DNA-directed RNA polymerase subunit epsilon from Lactobacillus johnsonii (strain CNCM I-12250 / La1 / NCC 533).